Reading from the N-terminus, the 288-residue chain is Ribosomal RNA small subunit methyltransferase A (288 aa).

The S-adenosyl-L-methionine site is built by Asn-28, Leu-30, Gly-55, Glu-76, Asp-101, and Asn-130.

This sequence belongs to the class I-like SAM-binding methyltransferase superfamily. rRNA adenine N(6)-methyltransferase family. RsmA subfamily.

It is found in the cytoplasm. The enzyme catalyses adenosine(1518)/adenosine(1519) in 16S rRNA + 4 S-adenosyl-L-methionine = N(6)-dimethyladenosine(1518)/N(6)-dimethyladenosine(1519) in 16S rRNA + 4 S-adenosyl-L-homocysteine + 4 H(+). Functionally, specifically dimethylates two adjacent adenosines (A1518 and A1519) in the loop of a conserved hairpin near the 3'-end of 16S rRNA in the 30S particle. May play a critical role in biogenesis of 30S subunits. The chain is Ribosomal RNA small subunit methyltransferase A from Moorella thermoacetica (strain ATCC 39073 / JCM 9320).